The sequence spans 450 residues: Bifunctional protein GlmU (450 aa).

Positions 1 to 217 (MKTLILAAGL…VDEITGVNNR (217 aa)) are pyrophosphorylase. Residues 6–9 (LAAG), Lys20, Gln68, 73–74 (GT), 95–97 (YGD), Gly134, Glu146, Asn161, and Asn215 contribute to the UDP-N-acetyl-alpha-D-glucosamine site. Asp97 provides a ligand contact to Mg(2+). Asn215 contributes to the Mg(2+) binding site. The tract at residues 218-238 (IQLANLEKKIRRKINEKLMNQ) is linker. The tract at residues 239–450 (GVRIIDPNAV…GGQKNANNKK (212 aa)) is N-acetyltransferase. Positions 320 and 338 each coordinate UDP-N-acetyl-alpha-D-glucosamine. The Proton acceptor role is filled by His350. UDP-N-acetyl-alpha-D-glucosamine is bound by residues Tyr353 and Asn364. Acetyl-CoA is bound by residues Ala367, 373-374 (NY), Ser392, Ala410, and Arg427.

In the N-terminal section; belongs to the N-acetylglucosamine-1-phosphate uridyltransferase family. The protein in the C-terminal section; belongs to the transferase hexapeptide repeat family. In terms of assembly, homotrimer. Mg(2+) is required as a cofactor.

Its subcellular location is the cytoplasm. The enzyme catalyses alpha-D-glucosamine 1-phosphate + acetyl-CoA = N-acetyl-alpha-D-glucosamine 1-phosphate + CoA + H(+). The catalysed reaction is N-acetyl-alpha-D-glucosamine 1-phosphate + UTP + H(+) = UDP-N-acetyl-alpha-D-glucosamine + diphosphate. It functions in the pathway nucleotide-sugar biosynthesis; UDP-N-acetyl-alpha-D-glucosamine biosynthesis; N-acetyl-alpha-D-glucosamine 1-phosphate from alpha-D-glucosamine 6-phosphate (route II): step 2/2. It participates in nucleotide-sugar biosynthesis; UDP-N-acetyl-alpha-D-glucosamine biosynthesis; UDP-N-acetyl-alpha-D-glucosamine from N-acetyl-alpha-D-glucosamine 1-phosphate: step 1/1. The protein operates within bacterial outer membrane biogenesis; LPS lipid A biosynthesis. Its function is as follows. Catalyzes the last two sequential reactions in the de novo biosynthetic pathway for UDP-N-acetylglucosamine (UDP-GlcNAc). The C-terminal domain catalyzes the transfer of acetyl group from acetyl coenzyme A to glucosamine-1-phosphate (GlcN-1-P) to produce N-acetylglucosamine-1-phosphate (GlcNAc-1-P), which is converted into UDP-GlcNAc by the transfer of uridine 5-monophosphate (from uridine 5-triphosphate), a reaction catalyzed by the N-terminal domain. This chain is Bifunctional protein GlmU, found in Thermosipho melanesiensis (strain DSM 12029 / CIP 104789 / BI429).